Here is a 402-residue protein sequence, read N- to C-terminus: Phosphoglycerate kinase (402 aa).

Substrate-binding positions include 24–26 (DFN), R40, 63–66 (HFGR), R122, and R155. Residues K206, G297, E328, and 358–361 (GGDS) contribute to the ATP site.

Belongs to the phosphoglycerate kinase family. As to quaternary structure, monomer.

It is found in the cytoplasm. The enzyme catalyses (2R)-3-phosphoglycerate + ATP = (2R)-3-phospho-glyceroyl phosphate + ADP. It functions in the pathway carbohydrate degradation; glycolysis; pyruvate from D-glyceraldehyde 3-phosphate: step 2/5. The polypeptide is Phosphoglycerate kinase (Prochlorococcus marinus (strain MIT 9312)).